Here is a 163-residue protein sequence, read N- to C-terminus: Phosphopantetheine adenylyltransferase (163 aa).

Residue Thr-10 participates in substrate binding. Residues 10–11 (TF) and His-18 each bind ATP. Substrate contacts are provided by Lys-42, Leu-74, and Arg-88. ATP is bound by residues 89–91 (GLR), Glu-99, and 124–130 (NSFISST).

It belongs to the bacterial CoaD family. As to quaternary structure, homohexamer. The cofactor is Mg(2+).

The protein resides in the cytoplasm. The enzyme catalyses (R)-4'-phosphopantetheine + ATP + H(+) = 3'-dephospho-CoA + diphosphate. Its pathway is cofactor biosynthesis; coenzyme A biosynthesis; CoA from (R)-pantothenate: step 4/5. In terms of biological role, reversibly transfers an adenylyl group from ATP to 4'-phosphopantetheine, yielding dephospho-CoA (dPCoA) and pyrophosphate. This is Phosphopantetheine adenylyltransferase from Shewanella baltica (strain OS223).